A 354-amino-acid chain; its full sequence is MVPAAENLSPIPASIDTNDIPLIANDLKLLETQAKLINILQGVPFYLPVNLTKIESLLETLTMGVSNTVDLYFHDNEVRKEWKDTLNFINTIVYTNFFLFVQNESSLSMAVQHSSNNNKTSNSERCAKDLMKIISNMHIFYSITFNFIFPIKSIKSFSSGNNRFHSNGKEFLFANHFIEILQNFIAITFAIFQRCEVILYDEFYKNLSNEEINVQLLLIHDKILEILKKIEIIVSFLRDEMNSNGSFKSIKGFNKVLNLIKYMLRFSKKKQNFARNSDNNNVTDYSQSAKNKNVLLKFPVSELNRIYLKFKEISDFLMEREVVQRSIIIDKDLESDNLGITTANFNDFYDAFYN.

The protein to yeast YHR056c.

This is an uncharacterized protein from Saccharomyces cerevisiae (strain ATCC 204508 / S288c) (Baker's yeast).